The primary structure comprises 111 residues: Ig kappa chain V region 3368 (111 aa).

Residues 1–24 (ADIVMTQTPSSVSAAVGGTVTIKC) are framework-1. The segment at 25–35 (QASESIGNELA) is complementarity-determining-1. The framework-2 stretch occupies residues 36 to 50 (WYQQKPGQPPKLLIY). Positions 51–57 (RASKLAS) are complementarity-determining-2. Positions 58–89 (GVSSRFKGSGSGTEFTLTISGVQCDDAGIYYC) are framework-3. A complementarity-determining-3 region spans residues 90 to 101 (QQDWNSNNVVNN). Residues 102 to 111 (FGGGTEVVVK) are framework-4.

This is Ig kappa chain V region 3368 from Oryctolagus cuniculus (Rabbit).